The sequence spans 144 residues: Histone H2B.2, sperm (144 aa).

The tract at residues 1-51 (MPRSPAKTSPRKGSPRKGSPSRKASPKRGGKGAKRAGKGGRRRRVVKRRRR) is disordered. 5 short sequence motifs (SPKK motif) span residues 4 to 7 (SPAK), 9 to 12 (SPRK), 14 to 17 (SPRK), 19 to 22 (SPSR), and 25 to 28 (SPKR). Phosphoserine is present on residues Ser14, Ser19, and Ser25. Positions 24-51 (ASPKRGGKGAKRAGKGGRRRRVVKRRRR) are enriched in basic residues. Ser131 carries an O-linked (GlcNAc) serine glycan. A Glycyl lysine isopeptide (Lys-Gly) (interchain with G-Cter in ubiquitin) cross-link involves residue Lys139.

This sequence belongs to the histone H2B family. In terms of assembly, the nucleosome is a histone octamer containing two molecules each of H2A, H2B, H3 and H4 assembled in one H3-H4 heterotetramer and two H2A-H2B heterodimers. The octamer wraps approximately 147 bp of DNA. Post-translationally, monoubiquitination of Lys-139 gives a specific tag for epigenetic transcriptional activation and is also prerequisite for histone H3 'Lys-4' and 'Lys-79' methylation. In terms of processing, phosphorylated on SPKK motifs 3, 4 and 5; which may regulate DNA binding. Dephosphorylated during maturation of spermatids to mature sperm and rephosphorylated at fertilization.

The protein resides in the nucleus. Its subcellular location is the chromosome. Core component of nucleosome. Nucleosomes wrap and compact DNA into chromatin, limiting DNA accessibility to the cellular machineries which require DNA as a template. Histones thereby play a central role in transcription regulation, DNA repair, DNA replication and chromosomal stability. DNA accessibility is regulated via a complex set of post-translational modifications of histones, also called histone code, and nucleosome remodeling. This chain is Histone H2B.2, sperm, found in Parechinus angulosus (Angulate sea urchin).